Consider the following 68-residue polypeptide: Protein SlyX homolog (68 aa).

It belongs to the SlyX family.

The sequence is that of Protein SlyX homolog from Ectopseudomonas mendocina (strain ymp) (Pseudomonas mendocina).